Here is a 320-residue protein sequence, read N- to C-terminus: 4-diphosphocytidyl-2-C-methyl-D-erythritol kinase (320 aa).

Lys20 is a catalytic residue. 112–122 is a binding site for ATP; sequence PVAGGMGGGSA. Residue Asp154 is part of the active site.

This sequence belongs to the GHMP kinase family. IspE subfamily.

It catalyses the reaction 4-CDP-2-C-methyl-D-erythritol + ATP = 4-CDP-2-C-methyl-D-erythritol 2-phosphate + ADP + H(+). The protein operates within isoprenoid biosynthesis; isopentenyl diphosphate biosynthesis via DXP pathway; isopentenyl diphosphate from 1-deoxy-D-xylulose 5-phosphate: step 3/6. In terms of biological role, catalyzes the phosphorylation of the position 2 hydroxy group of 4-diphosphocytidyl-2C-methyl-D-erythritol. The sequence is that of 4-diphosphocytidyl-2-C-methyl-D-erythritol kinase from Pseudarthrobacter chlorophenolicus (strain ATCC 700700 / DSM 12829 / CIP 107037 / JCM 12360 / KCTC 9906 / NCIMB 13794 / A6) (Arthrobacter chlorophenolicus).